The primary structure comprises 305 residues: Aspartate carbamoyltransferase catalytic subunit (305 aa).

2 residues coordinate carbamoyl phosphate: Arg-51 and Thr-52. Residue Lys-79 participates in L-aspartate binding. Residues Arg-101, His-130, and Gln-133 each contribute to the carbamoyl phosphate site. Residues Arg-163 and Arg-215 each contribute to the L-aspartate site. Carbamoyl phosphate is bound by residues Gly-256 and Pro-257.

This sequence belongs to the aspartate/ornithine carbamoyltransferase superfamily. ATCase family. Heterododecamer (2C3:3R2) of six catalytic PyrB chains organized as two trimers (C3), and six regulatory PyrI chains organized as three dimers (R2).

It carries out the reaction carbamoyl phosphate + L-aspartate = N-carbamoyl-L-aspartate + phosphate + H(+). It participates in pyrimidine metabolism; UMP biosynthesis via de novo pathway; (S)-dihydroorotate from bicarbonate: step 2/3. Its function is as follows. Catalyzes the condensation of carbamoyl phosphate and aspartate to form carbamoyl aspartate and inorganic phosphate, the committed step in the de novo pyrimidine nucleotide biosynthesis pathway. In Ehrlichia canis (strain Jake), this protein is Aspartate carbamoyltransferase catalytic subunit.